Here is a 212-residue protein sequence, read N- to C-terminus: uncharacterized protein (212 aa).

S-adenosyl-L-methionine-binding residues include Gly53, Glu74, and Asp97.

It belongs to the methyltransferase superfamily. YrrT family.

Functionally, could be a S-adenosyl-L-methionine-dependent methyltransferase. This is an uncharacterized protein from Bacillus mycoides (strain KBAB4) (Bacillus weihenstephanensis).